The primary structure comprises 216 residues: Large ribosomal subunit protein eL15 (216 aa).

This sequence belongs to the eukaryotic ribosomal protein eL15 family.

The chain is Large ribosomal subunit protein eL15 from Metallosphaera sedula (strain ATCC 51363 / DSM 5348 / JCM 9185 / NBRC 15509 / TH2).